The following is an 800-amino-acid chain: Probable inorganic carbon transporter subunit DabA (800 aa).

Cys-329, Asp-331, His-488, and Cys-503 together coordinate Zn(2+).

It belongs to the inorganic carbon transporter (TC 9.A.2) DabA family. As to quaternary structure, forms a complex with DabB. Zn(2+) is required as a cofactor.

It localises to the cell inner membrane. Part of an energy-coupled inorganic carbon pump. This is Probable inorganic carbon transporter subunit DabA from Roseobacter denitrificans (strain ATCC 33942 / OCh 114) (Erythrobacter sp. (strain OCh 114)).